Here is a 386-residue protein sequence, read N- to C-terminus: Synaptotagmin-5 (386 aa).

Residues 1 to 16 (MFPEPPTPGPPSPDTP) show a composition bias toward pro residues. Residues 1–23 (MFPEPPTPGPPSPDTPPDSSRIS) are disordered. Over 1–24 (MFPEPPTPGPPSPDTPPDSSRISH) the chain is Vesicular. A helical transmembrane segment spans residues 25 to 45 (GPVPPWALATIVLVSGLLIFS). Over 46-386 (CCFCLYRKSC…PDRVRLLPAP (341 aa)) the chain is Cytoplasmic. C2 domains follow at residues 108 to 227 (ELGR…QAWR) and 239 to 372 (KLGD…AQWH). Positions 138, 139, 145, 197, 198, 199, 202, 205, 270, 276, 330, and 332 each coordinate Ca(2+).

The protein belongs to the synaptotagmin family. Homodimer. Interacts with both alpha- and beta-tubulin. Ca(2+) is required as a cofactor.

Its subcellular location is the cytoplasmic vesicle. It localises to the secretory vesicle. The protein localises to the synaptic vesicle membrane. The protein resides in the recycling endosome membrane. Functionally, may be involved in Ca(2+)-dependent exocytosis of secretory vesicles through Ca(2+) and phospholipid binding to the C2 domain or may serve as Ca(2+) sensors in the process of vesicular trafficking and exocytosis. Regulates the Ca(2+)-dependent secretion of norepinephrine in PC12 cells. Required for export from the endocytic recycling compartment to the cell surface. The chain is Synaptotagmin-5 (SYT5) from Homo sapiens (Human).